We begin with the raw amino-acid sequence, 86 residues long: Dynein light chain 1, cytoplasmic (86 aa).

It belongs to the dynein light chain family. As to quaternary structure, homodimer. Cytoplasmic dynein consists of two catalytic heavy chains (HCs) and a number of non-catalytic subunits which present intermediate chains (ICs), light intermediate chains (LICs) and light chains (LCs). Component of the nuclear pore complex (NPC). NPC constitutes the exclusive means of nucleocytoplasmic transport. NPCs allow the passive diffusion of ions and small molecules and the active, nuclear transport receptor-mediated bidirectional transport of macromolecules such as proteins, RNAs, ribonucleoparticles (RNPs), and ribosomal subunits across the nuclear envelope. Due to its 8-fold rotational symmetry, all subunits are present with 8 copies or multiples thereof.

The protein localises to the cytoplasm. It is found in the cytoskeleton. It localises to the nucleus. The protein resides in the nuclear pore complex. Functionally, acts as one of several non-catalytic accessory components of the cytoplasmic dynein complex that are thought to be involved in linking dynein to cargos and to adapter proteins that regulate dynein function. Cytoplasmic dynein 1 acts as a motor for the intracellular retrograde motility of vesicles and organelles along microtubules. May play a role in changing or maintaining the spatial distribution of cytoskeletal structures. Also a component of the nuclear pore complex. The sequence is that of Dynein light chain 1, cytoplasmic (DYN2) from Candida glabrata (strain ATCC 2001 / BCRC 20586 / JCM 3761 / NBRC 0622 / NRRL Y-65 / CBS 138) (Yeast).